The chain runs to 233 residues: MATVRELKATARPKSGKGAARAERRAGRVPGVIYGNNQPPQPISVEEPELRQRILAGRFLTTVFDISLEGKKHRVIPRDFHLDPVKDFPIHVDFLRLGEGATIRVSIPIRLLKADVAPGVKRGGTVNLVIHAIDVECAADDIPQFIEADVGGLEMSHSLHLSDVELPPGVKPLAREDMTLVTIVPPSGYAEEVKAAAAAAAAGTAAPAAGAAPAAGAAAAGAKAPAGGGDKKK.

Residues 1-23 (MATVRELKATARPKSGKGAARAE) are disordered.

It belongs to the bacterial ribosomal protein bL25 family. CTC subfamily. As to quaternary structure, part of the 50S ribosomal subunit; part of the 5S rRNA/L5/L18/L25 subcomplex. Contacts the 5S rRNA. Binds to the 5S rRNA independently of L5 and L18.

This is one of the proteins that binds to the 5S RNA in the ribosome where it forms part of the central protuberance. In Nitrobacter hamburgensis (strain DSM 10229 / NCIMB 13809 / X14), this protein is Large ribosomal subunit protein bL25.